Reading from the N-terminus, the 491-residue chain is COP9 signalosome complex subunit 1 (491 aa).

The PCI domain occupies 269-431 (CLLLASFDHC…KILYARDVDQ (163 aa)). The disordered stretch occupies residues 465–491 (HVKSPPREGSQGELTPANSQSRMSTNM). 2 positions are modified to phosphoserine: Ser-468 and Ser-474. Residues 476–491 (GELTPANSQSRMSTNM) are compositionally biased toward polar residues. The residue at position 479 (Thr-479) is a Phosphothreonine. Ser-483 is subject to Phosphoserine.

Belongs to the CSN1 family. Component of the CSN complex, composed of COPS1/GPS1, COPS2, COPS3, COPS4, COPS5, COPS6, COPS7 (COPS7A or COPS7B), COPS8 and COPS9 isoform 1. In the complex, it probably interacts directly with COPS2, COPS3, COPS4 and COPS5. Interacts directly with inositol kinase ITPK1. Interacts with CAPN8. Interacts with USP48. Interacts with ASB4; this interaction negatively regulates GPS1. As to expression, widely expressed.

It localises to the cytoplasm. The protein localises to the nucleus. Essential component of the COP9 signalosome complex (CSN), a complex involved in various cellular and developmental processes. The CSN complex is an essential regulator of the ubiquitin (Ubl) conjugation pathway by mediating the deneddylation of the cullin subunits of SCF-type E3 ligase complexes, leading to decrease the Ubl ligase activity of SCF-type complexes such as SCF, CSA or DDB2. The complex is also involved in phosphorylation of p53/TP53, c-jun/JUN, IkappaBalpha/NFKBIA, ITPK1 and IRF8/ICSBP, possibly via its association with CK2 and PKD kinases. CSN-dependent phosphorylation of TP53 and JUN promotes and protects degradation by the Ubl system, respectively. Suppresses G-protein- and mitogen-activated protein kinase-mediated signal transduction. The polypeptide is COP9 signalosome complex subunit 1 (GPS1) (Homo sapiens (Human)).